Consider the following 657-residue polypeptide: Trifunctional protein RibF/MnmA (657 aa).

The interval 1–141 (MLSIINLTSK…VVKKDHCSTS (141 aa)) is FMN adenylyltransferase. Residues 158-282 (LLLTPFYLKG…DKKAALSFFH (125 aa)) form a riboflavin kinase region. The interval 283 to 657 (KQEKPKVVVA…GGGKITKIIK (375 aa)) is tRNA-specific 2-thiouridylase MnmA. ATP contacts are provided by residues 292-299 (ALSGGVDS) and methionine 318. The tract at residues 389–391 (NPD) is interaction with target base in tRNA. Cysteine 394 acts as the Nucleophile in catalysis. Cysteine 394 and cysteine 492 are oxidised to a cystine. Position 420 (glycine 420) interacts with ATP. An interaction with tRNA region spans residues 442 to 444 (KDQ). Cysteine 492 acts as the Cysteine persulfide intermediate in catalysis.

It in the N-terminal section; belongs to the RibF family. The protein in the C-terminal section; belongs to the MnmA/TRMU family.

The protein resides in the cytoplasm. The enzyme catalyses riboflavin + ATP = FMN + ADP + H(+). It catalyses the reaction FMN + ATP + H(+) = FAD + diphosphate. The catalysed reaction is S-sulfanyl-L-cysteinyl-[protein] + uridine(34) in tRNA + AH2 + ATP = 2-thiouridine(34) in tRNA + L-cysteinyl-[protein] + A + AMP + diphosphate + H(+). Its pathway is cofactor biosynthesis; FAD biosynthesis; FAD from FMN: step 1/1. It functions in the pathway cofactor biosynthesis; FMN biosynthesis; FMN from riboflavin (ATP route): step 1/1. In terms of biological role, involved in FAD and FMN biosynthesis. Functionally, catalyzes the 2-thiolation of uridine at the wobble position (U34) of tRNA, leading to the formation of s(2)U34. The chain is Trifunctional protein RibF/MnmA (ribF/mnmA) from Mycoplasmoides gallisepticum (strain R(low / passage 15 / clone 2)) (Mycoplasma gallisepticum).